The primary structure comprises 94 residues: CRISPR-associated endoribonuclease Cas2 (94 aa).

Asp-11 contacts Mg(2+).

The protein belongs to the CRISPR-associated endoribonuclease Cas2 protein family. In terms of assembly, homodimer, forms a heterotetramer with a Cas1 homodimer. It depends on Mg(2+) as a cofactor.

Its function is as follows. CRISPR (clustered regularly interspaced short palindromic repeat), is an adaptive immune system that provides protection against mobile genetic elements (viruses, transposable elements and conjugative plasmids). CRISPR clusters contain sequences complementary to antecedent mobile elements and target invading nucleic acids. CRISPR clusters are transcribed and processed into CRISPR RNA (crRNA). Functions as a ssRNA-specific endoribonuclease. Involved in the integration of spacer DNA into the CRISPR cassette. The sequence is that of CRISPR-associated endoribonuclease Cas2 from Thermus thermophilus (strain ATCC 27634 / DSM 579 / HB8).